The primary structure comprises 208 residues: ATP-dependent Clp protease proteolytic subunit (208 aa).

The Nucleophile role is filled by S105. H130 is a catalytic residue.

This sequence belongs to the peptidase S14 family. In terms of assembly, fourteen ClpP subunits assemble into 2 heptameric rings which stack back to back to give a disk-like structure with a central cavity, resembling the structure of eukaryotic proteasomes.

It localises to the cytoplasm. It carries out the reaction Hydrolysis of proteins to small peptides in the presence of ATP and magnesium. alpha-casein is the usual test substrate. In the absence of ATP, only oligopeptides shorter than five residues are hydrolyzed (such as succinyl-Leu-Tyr-|-NHMec, and Leu-Tyr-Leu-|-Tyr-Trp, in which cleavage of the -Tyr-|-Leu- and -Tyr-|-Trp bonds also occurs).. In terms of biological role, cleaves peptides in various proteins in a process that requires ATP hydrolysis. Has a chymotrypsin-like activity. Plays a major role in the degradation of misfolded proteins. This chain is ATP-dependent Clp protease proteolytic subunit, found in Xylella fastidiosa (strain 9a5c).